A 945-amino-acid chain; its full sequence is MRARSGARGALLLALLLCWDPTPSLAGIDSGGQALPDSFPSAPAEQLPHFLLEPEDAYIVKNKPVELHCRAFPATQIYFKCNGEWVSQKGHVTQESLDEATGLRIREVQIEVSRQQVEELFGLEDYWCQCVAWSSSGTTKSRRAYIRIAYLRKNFDQEPLAKEVPLDHEVLLQCRPPEGVPVAEVEWLKNEDVIDPAQDTNFLLTIDHNLIIRQARLSDTANYTCVAKNIVAKRRSTTATVIVYVNGGWSSWAEWSPCSNRCGRGWQKRTRTCTNPAPLNGGAFCEGQACQKTACTTVCPVDGAWTEWSKWSACSTECAHWRSRECMAPPPQNGGRDCSGTLLDSKNCTDGLCVLNQRTLNDPKSRPLEPSGDVALYAGLVVAVFVVLAVLMAVGVIVYRRNCRDFDTDITDSSAALTGGFHPVNFKTARPSNPQLLHPSAPPDLTASAGIYRGPVYALQDSADKIPMTNSPLLDPLPSLKIKVYDSSTIGSGAGLADGADLLGVLPPGTYPGDFSRDTHFLHLRSASLGSQHLLGLPRDPSSSVSGTFGCLGGRLTIPGTGVSLLVPNGAIPQGKFYDLYLRINKTESTLPLSEGSQTVLSPSVTCGPTGLLLCRPVVLTVPHCAEVIAGDWIFQLKTQAHQGHWEEVVTLDEETLNTPCYCQLEAKSCHILLDQLGTYVFTGESYSRSAVKRLQLAIFAPALCTSLEYSLRVYCLEDTPAALKEVLELERTLGGYLVEEPKTLLFKDSYHNLRLSLHDIPHAHWRSKLLAKYQEIPFYHVWNGSQKALHCTFTLERHSLASTEFTCKVCVRQVEGEGQIFQLHTTLAETPAGSLDALCSAPGNAATTQLGPYAFKIPLSIRQKICNSLDAPNSRGNDWRLLAQKLSMDRYLNYFATKASPTGVILDLWEARQQDDGDLNSLASALEEMGKSEMLVAMTTDGDC.

Positions 1 to 26 (MRARSGARGALLLALLLCWDPTPSLA) are cleaved as a signal peptide. The Extracellular portion of the chain corresponds to 27–377 (GIDSGGQALP…LEPSGDVALY (351 aa)). Positions 48-145 (PHFLLEPEDA…SGTTKSRRAY (98 aa)) constitute an Ig-like domain. 9 disulfides stabilise this stretch: cysteine 69–cysteine 130, cysteine 81–cysteine 128, cysteine 174–cysteine 225, cysteine 258–cysteine 295, cysteine 262–cysteine 299, cysteine 273–cysteine 285, cysteine 314–cysteine 348, cysteine 318–cysteine 353, and cysteine 326–cysteine 338. The 90-residue stretch at 153 to 242 (KNFDQEPLAK…KRRSTTATVI (90 aa)) folds into the Ig-like C2-type domain. A glycan (N-linked (GlcNAc...) asparagine) is linked at asparagine 222. TSP type-1 domains lie at 246–300 (NGGW…TVCP) and 302–354 (DGAW…GLCV). An N-linked (GlcNAc...) asparagine glycan is attached at asparagine 347. The helical transmembrane segment at 378 to 398 (AGLVVAVFVVLAVLMAVGVIV) threads the bilayer. Residues 399–945 (YRRNCRDFDT…LVAMTTDGDC (547 aa)) are Cytoplasmic-facing. Cysteine 403 carries the S-palmitoyl cysteine lipid modification. Residues 543–686 (SSVSGTFGCL…LGTYVFTGES (144 aa)) form the ZU5 domain. Tyrosine 581 bears the Phosphotyrosine mark. The UPA domain stretch occupies residues 689–838 (RSAVKRLQLA…AETPAGSLDA (150 aa)). The interaction with DCC stretch occupies residues 707-725 (SLEYSLRVYCLEDTPAALK). The Death domain occupies 865–943 (KICNSLDAPN…EMLVAMTTDG (79 aa)).

It belongs to the unc-5 family. As to quaternary structure, interacts with the cytoplasmic part of DCC. Interacts with GNAI2 via its cytoplasmic part. Interacts (via death domain) with DAPK1 (via death domain). Interacts (via extracellular domain) with FLRT3 (via extracellular domain); the interaction is direct. Interacts (via extracellular domain) with FLRT2 and FLRT3 (via extracellular domain), but has higher affinity for FLRT3. Identified in a complex with FLRT3 and ADGRL3; does not interact with ADGRL3 by itself. In terms of processing, phosphorylated on cytoplasmic tyrosine residues. Post-translationally, proteolytically cleaved by caspases during apoptosis. The cleavage does not take place when the receptor is associated with netrin ligand. Its cleavage by caspases is required to induce apoptosis. Palmitoylation is required for pro-apoptotic activity, but not for location at lipid rafts. As to expression, mainly expressed in regions of differentiating neurons. Expressed in the developing sensory ganglia that flank the spinal cord from E12, peaking at E14. Expressed in the roof plate region of the spinal cord from E14.

The protein localises to the cell membrane. Its subcellular location is the membrane raft. Receptor for netrin required for axon guidance. Mediates axon repulsion of neuronal growth cones in the developing nervous system upon ligand binding. Axon repulsion in growth cones may be caused by its association with DCC that may trigger signaling for repulsion. Functions as a netrin receptor that negatively regulates vascular branching during angiogenesis. Mediates retraction of tip cell filopodia on endothelial growth cones in response to netrin. It also acts as a dependence receptor required for apoptosis induction when not associated with netrin ligand. Mediates apoptosis by activating DAPK1. In the absence of NTN1, activates DAPK1 by reducing its autoinhibitory phosphorylation at Ser-308 thereby increasing its catalytic activity. In Rattus norvegicus (Rat), this protein is Netrin receptor UNC5B (Unc5b).